Reading from the N-terminus, the 300-residue chain is Protein phosphatase 2C 1 (300 aa).

The PPM-type phosphatase domain occupies 23-298 (IFAASEMQGW…DNMTTILVYL (276 aa)). The Mn(2+) site is built by Asp-57, Gly-58, Asp-237, and Asp-289.

It belongs to the PP2C family. It depends on Mg(2+) as a cofactor. The cofactor is Mn(2+). In terms of processing, the N-terminus is blocked.

It localises to the membrane. The enzyme catalyses O-phospho-L-seryl-[protein] + H2O = L-seryl-[protein] + phosphate. The catalysed reaction is O-phospho-L-threonyl-[protein] + H2O = L-threonyl-[protein] + phosphate. In terms of biological role, serine and threonine phosphatase. The sequence is that of Protein phosphatase 2C 1 from Paramecium tetraurelia.